The primary structure comprises 292 residues: Transmembrane and ubiquitin-like domain-containing protein 1 (292 aa).

The chain crosses the membrane as a helical span at residues 11-31 (VTLLFGVVFLVLVLVLAWAST). The disordered stretch occupies residues 34–143 (VEPPEHLLSP…TQPSAEDAAS (110 aa)). A compositionally biased stretch (basic and acidic residues) spans 71–80 (VRDEDDKSEP). A compositionally biased stretch (low complexity) spans 84-94 (AGAAGQSADGS). The Ubiquitin-like domain maps to 149 to 222 (MVLRLKFLND…LHCHISQHAT (74 aa)). 2 helical membrane-spanning segments follow: residues 237–257 (VALN…SVLW) and 269–289 (APAT…AFGV).

The protein resides in the membrane. The protein localises to the cytoplasm. Its subcellular location is the nucleus. Functionally, may contribute to the regulation of translation during cell-cycle progression. May contribute to the regulation of cell proliferation. The membrane form is involved in sterol-regulated ubiquitination and degradation of HMG-CoA reductase HMGCR. May be involved in centrosome assembly. This is Transmembrane and ubiquitin-like domain-containing protein 1 (tmub1) from Danio rerio (Zebrafish).